Here is a 309-residue protein sequence, read N- to C-terminus: Olfactory receptor 7A10 (309 aa).

The Extracellular segment spans residues 1–25 (MKSWNNTIILEFLLLGISEEPELQA). Residue Asn5 is glycosylated (N-linked (GlcNAc...) asparagine). The chain crosses the membrane as a helical span at residues 26 to 46 (FLFGLFLSMYLVTVLGNLLII). The Cytoplasmic segment spans residues 47–54 (LATISDSH). The chain crosses the membrane as a helical span at residues 55 to 75 (LHTPMYFFLSNLSFVDICFVS). Topologically, residues 76 to 99 (TTVPKMLVNIQTHNKVITYAGCIT) are extracellular. An intrachain disulfide couples Cys97 to Cys189. A helical transmembrane segment spans residues 100–120 (QMCFFLLFVGLDNFLLTVMAY). Topologically, residues 121–139 (DRFVAICHPLHYMVIMNPQ) are cytoplasmic. The helical transmembrane segment at 140–160 (LCGLLVLASWIMSVLNSMLQS) threads the bilayer. Residues 161 to 197 (LMVLPLPFCTHMEIPHFFCEINQVVHLACSDTFLNDI) are Extracellular-facing. Residues 198–217 (VMYFAVALLGGGPLTGILYS) traverse the membrane as a helical segment. The Cytoplasmic portion of the chain corresponds to 218 to 237 (YSKIVSSIRAISSAQGKYKA). Residues 238–258 (FSTCASHLSVVSLFYGTCLGV) form a helical membrane-spanning segment. Residues 259 to 271 (YLSSAATHNSHTG) are Extracellular-facing. The helical transmembrane segment at 272–292 (AAASVMYTVVTPMLNPFIYSL) threads the bilayer. At 293–309 (RNKHIKGAMKTFFRGKQ) the chain is on the cytoplasmic side.

Belongs to the G-protein coupled receptor 1 family.

The protein resides in the cell membrane. In terms of biological role, odorant receptor. The chain is Olfactory receptor 7A10 (OR7A10) from Homo sapiens (Human).